The primary structure comprises 3016 residues: Genome polyprotein (3016 aa).

Ser-2 carries the N-acetylserine; by host modification. Residues 2–23 (STLPKPQRKTKRNTNRRPMDVK) are interaction with STAT1. The tract at residues 2–58 (STLPKPQRKTKRNTNRRPMDVKFPGGGQIVGGVYLLPRRGPRLGVRATRKTSERSQP) is interaction with EIF2AK2/PKR. The interval 2–59 (STLPKPQRKTKRNTNRRPMDVKFPGGGQIVGGVYLLPRRGPRLGVRATRKTSERSQPR) is interaction with DDX3X. A disordered region spans residues 2–75 (STLPKPQRKT…PKARQSQGRH (74 aa)). The Cytoplasmic segment spans residues 2-168 (STLPKPQRKT…EDGINYATGN (167 aa)). 2 short sequence motifs (nuclear localization signal) span residues 5-13 (PKPQRKTKR) and 38-43 (PRRGPR). A compositionally biased stretch (basic residues) spans 7 to 16 (PQRKTKRNTN). A compositionally biased stretch (low complexity) spans 32–47 (GGVYLLPRRGPRLGVR). Ser-53 carries the phosphoserine; by host modification. 2 consecutive short sequence motifs (nuclear localization signal) follow at residues 58–64 (PRGRRQP) and 66–71 (PKARQS). Residues Ser-99 and Ser-116 each carry the phosphoserine; by host modification. The important for endoplasmic reticulum and mitochondrial localization stretch occupies residues 112–152 (PRRRSRNLGKVIDTLTCGFADLMGYIPVVGAPLGGVAAALA). An interaction with APOA2 region spans residues 122–173 (VIDTLTCGFADLMGYIPVVGAPLGGVAAALAHGVRAIEDGINYATGNLPGCS). Residues 164–167 (YATG) form an important for lipid droplets localization region. The chain crosses the membrane as a helical span at residues 169 to 189 (LPGCSFSIFLLALLSCLTTPA). Positions 178–191 (LLALLSCLTTPASA) are cleaved as a propeptide — ER anchor for the core protein, removed in mature form by host signal peptidase. Residues 190-358 (SAVHYRNISG…LEGHWGVIGA (169 aa)) lie on the Lumenal side of the membrane. N-linked (GlcNAc...) asparagine; by host glycans are attached at residues Asn-196, Asn-209, Asn-234, and Asn-250. Residues 265–296 (LVGSAAACSALYIGDLCGGVFLVGQLFTFRPR) form an important for fusion region. Residue Asn-305 is glycosylated (N-linked (GlcNAc...) asparagine; by host). The chain crosses the membrane as a helical span at residues 359–379 (LLYYSMVANWAKVFAVLLLFA). Topologically, residues 380–727 (GVDATTHIGS…WEYIVLAFLV (348 aa)) are lumenal. Residues 385–411 (THIGSSASATTNRLTSFFSPGSKQNVQ) are HVR1. N-linked (GlcNAc...) (high mannose) asparagine; by host glycans are attached at residues Asn-416, Asn-422, and Asn-429. 4 cysteine pairs are disulfide-bonded: Cys-428-Cys-552, Cys-451-Cys-458, Cys-486-Cys-494, and Cys-503-Cys-508. Asn-447 carries an N-linked (GlcNAc...) asparagine; by host glycan. Residues 474–478 (ANISG) form an HVR2 region. N-linked (GlcNAc...) asparagine; by host glycosylation occurs at Asn-475. The interval 480–493 (SNDKPYCWHYPPRP) is CD81-binding 1. Asn-532 carries an N-linked (GlcNAc...) asparagine; by host glycan. A CD81-binding 2 region spans residues 544-551 (PPRGSWFG). A glycan (N-linked (GlcNAc...) asparagine; by host) is linked at Asn-556. 4 disulfide bridges follow: Cys-564–Cys-569, Cys-583–Cys-587, Cys-599–Cys-622, and Cys-609–Cys-646. N-linked (GlcNAc...) (high mannose) asparagine; by host glycosylation is found at Asn-625 and Asn-647. A disulfide bridge connects residues Cys-654 and Cys-679. Residues 662–673 (VEMSPLLFSTTQ) form a PKR/eIF2-alpha phosphorylation homology domain (PePHD) region. The helical transmembrane segment at 728–748 (LAVARVCACLWLMFLVGQAEA) threads the bilayer. Residues 749 to 759 (ALENLIVLNAT) are Lumenal-facing. The chain crosses the membrane as a helical span at residues 760–780 (SAAGSQGWVWGVVFICAAWYI). At 781-784 (RGRA) the chain is on the cytoplasmic side. The chain crosses the membrane as a helical span at residues 785–805 (APITTYAILQLWPLLLLVLAL). Residues 806 to 815 (PRRAYAYNGE) are Lumenal-facing. Residues 816 to 836 (EAASLGMLAIVIITIFTLTPA) form a helical membrane-spanning segment. At 837–883 (YKTLLISTLWWIQYYIARAEAMLYVWVPSLQVRGGRDAVILLTCLLH) the chain is on the cytoplasmic side. Residues 884-904 (PQLGFEVTKAILALLGPLYIL) traverse the membrane as a helical segment. The Lumenal segment spans residues 905–930 (QYSLLKTPYFVRAHILLRVCMFLRGV). The region spanning 905–1028 (QYSLLKTPYF…DIRDGGWRLL (124 aa)) is the Peptidase C18 domain. Residues 906 to 1208 (YSLLKTPYFV…PVENMQSTAR (303 aa)) are protease NS2-3. Cys-924 carries S-palmitoyl cysteine; by host lipidation. A helical transmembrane segment spans residues 931–951 (AGGKYVQAALLRLGAWTGTYI). Residues 931 to 951 (AGGKYVQAALLRLGAWTGTYI) form an interaction with host SCPS1 region. Over 952 to 1659 (YDHLTPLSDW…CMSADLEVIT (708 aa)) the chain is Cytoplasmic. Residues His-954, Glu-974, and Cys-995 each act as for protease NS2 activity; shared with dimeric partner in the active site. The Peptidase S29 domain occupies 1029-1210 (APITAYAQQT…ENMQSTARSP (182 aa)). Catalysis depends on charge relay system; for serine protease NS3 activity residues His-1085 and Asp-1109. The Zn(2+) site is built by Cys-1125 and Cys-1127. Ser-1167 (charge relay system; for serine protease NS3 activity) is an active-site residue. Positions 1173 and 1177 each coordinate Zn(2+). The Helicase ATP-binding domain occupies 1219 to 1371 (PAVPQTYQVG…PNITEVALSS (153 aa)). An ATP-binding site is contributed by 1232–1239 (APTGSGKS). Ser-1239 and Glu-1319 together coordinate Mg(2+). The DECH box motif lies at 1318–1321 (DECH). Residues 1488 to 1500 (QRRGRTGRGKHGV) are RNA-binding. The helical transmembrane segment at 1660-1680 (STWVLVGGVLAALAAYCLSVG) threads the bilayer. The NS3-binding stretch occupies residues 1681–1692 (CVVVCGRISTTG). Over 1681-1807 (CVVVCGRIST…SLTSPLSTST (127 aa)) the chain is Cytoplasmic. A helical membrane pass occupies residues 1808-1828 (TLLLNILGGWVASQLANPTAS). Residues 1829 to 1830 (TA) are Lumenal-facing. The helical transmembrane segment at 1831–1851 (FVVSGLAGATVGSIGLGRVLV) threads the bilayer. A topological domain (cytoplasmic) is located at residue Asp-1852. The helical transmembrane segment at 1853 to 1873 (IIAGYGAGVSGALVAFKIMSG) threads the bilayer. Residues 1874 to 1883 (ETPSAEDMVN) are Lumenal-facing. Residues 1884–1904 (LLPALLSPGALVVGVVCAAIL) traverse the membrane as a helical segment. At 1905–1974 (RRHAGPAEGA…WINSDWSTPC (70 aa)) the chain is on the cytoplasmic side. Cys-1974 carries S-palmitoyl cysteine; by host lipidation. An intramembrane segment occupies 1975-2004 (SGSWLRDIWDWVCTVLSDFKVWLKSKLVPA). At 2005–2995 (LPGVPFLSCQ…YHSVSRARPR (991 aa)) the chain is on the cytoplasmic side. Positions 2013, 2031, 2033, and 2054 each coordinate Zn(2+). Positions 2122 to 2210 (EFFTEVDGVR…ASSLASQLSA (89 aa)) are FKBP8-binding. Positions 2122–2335 (EFFTEVDGVR…PVPPPRRKSV (214 aa)) are transcriptional activation. Residues 2137 to 2141 (PACKP) are interaction with non-structural protein 4A. Residues 2191-2443 (RLARGSPPSC…ALVTPCAAEE (253 aa)) are interaction with host SKP2. Phosphoserine; by host is present on residues Ser-2196, Ser-2199, Ser-2203, Ser-2206, Ser-2209, and Ser-2212. Residues 2212–2251 (SLKATCTTHCAHPDADLIEANLLWRQEVGGNITRVESENK) form an ISDR region. Residues 2212–2277 (SLKATCTTHC…REPSVPAECH (66 aa)) form an interaction with EIF2AK2/PKR region. The tract at residues 2251 to 2309 (KVIVLDSFDPLVPEYDDREPSVPAECHRPNRPKFPPALPIWARPDYNPPLLETWKKPDY) is NS4B-binding. Residues 2302–2379 (ETWKKPDYAP…PTTSKSSDQA (78 aa)) are V3. Positions 2325–2328 (PPVP) match the SH3-binding motif. The Nuclear localization signal signature appears at 2330–2338 (PRRKSVVHL). A Glycyl lysine isopeptide (Lys-Gly) (interchain with G-Cter in ubiquitin) cross-link involves residue Lys-2353. The interval 2353–2414 (KSFPTQPAST…PDLSSGSWST (62 aa)) is disordered. Residues 2355–2376 (FPTQPASTPDSDSGHPTTSKSS) show a composition bias toward polar residues. Position 2454 is a phosphoserine; by host (Ser-2454). Residues 2639–2757 (PMGFSYDTRC…IAESAGVQED (119 aa)) form the RdRp catalytic domain. 3 residues coordinate Mg(2+): Asp-2645, Asp-2743, and Asp-2744. Residues 2996 to 3016 (IFLLCLLLLSVGVGIFLLPAR) form a helical membrane-spanning segment.

This sequence belongs to the hepacivirus polyprotein family. Homooligomer. Interacts with E1 (via C-terminus). Interacts with the non-structural protein 5A. Interacts (via N-terminus) with host STAT1 (via SH2 domain); this interaction results in decreased STAT1 phosphorylation and ubiquitin-mediated proteasome-dependent STAT1 degradation, leading to decreased IFN-stimulated gene transcription. Interacts with host STAT3; this interaction constitutively activates STAT3. Interacts with host LTBR receptor. Interacts with host TNFRSF1A receptor and possibly induces apoptosis. Interacts with host HNRPK. Interacts with host YWHAE. Interacts with host UBE3A/E6AP. Interacts with host DDX3X. Interacts with host APOA2. Interacts with host RXRA protein. Interacts with host SP110 isoform 3/Sp110b; this interaction sequesters the transcriptional corepressor SP110 away from the nucleus. Interacts with host CREB3 nuclear transcription protein; this interaction triggers cell transformation. Interacts with host ACY3. Interacts with host C1QR1. Interacts with host RBM24; this interaction, which enhances the interaction of the mature core protein with 5'-UTR, may inhibit viral translation and favor replication. Interacts with host EIF2AK2/PKR; this interaction induces the autophosphorylation of EIF2AK2. Part of the viral assembly initiation complex composed of NS2, E1, E2, NS3, NS4A, NS5A and the mature core protein. In terms of assembly, forms a heterodimer with envelope glycoprotein E2. Interacts with mature core protein. Interacts with protease NS2. The heterodimer E1/E2 interacts with host CLDN1; this interaction plays a role in viral entry into host cell. Interacts with host SPSB2 (via C-terminus). Part of the viral assembly initiation complex composed of NS2, E1, E2, NS3, NS4A, NS5A and the mature core protein. Interacts with host NEURL3; this interaction prevents E1 binding to glycoprotein E2. As to quaternary structure, forms a heterodimer with envelope glycoprotein E1. Interacts with host CD81 and SCARB1 receptors; these interactions play a role in viral entry into host cell. Interacts with host EIF2AK2/PKR; this interaction inhibits EIF2AK2 and probably allows the virus to evade the innate immune response. Interacts with host CD209/DC-SIGN and CLEC4M/DC-SIGNR. Interact with host SPCS1; this interaction is essential for viral particle assembly. Interacts with protease NS2. The heterodimer E1/E2 interacts with host CLDN1; this interaction plays a role in viral entry into host cell. Part of the viral assembly initiation complex composed of NS2, E1, E2, NS3, NS4A, NS5A and the mature core protein. Interacts with host SLC3A2/4F2hc; the interaction may facilitate viral entry into host cell. Interacts with human PLSCR1. Homohexamer. Homoheptamer. Interacts with protease NS2. In terms of assembly, homodimer. Interacts with host SPCS1; this interaction is essential for viral particle assembly. Interacts with envelope glycoprotein E1. Interacts with envelope glycoprotein E2. Interacts with viroporin p7. Interacts with serine protease/helicase NS3. Part of the replication complex composed of NS2, NS3, NS4A, NS4B, NS5A and the RNA-directed RNA polymerase embedded in an ER-derived membranous web. Part of the viral assembly initiation complex composed of NS2, E1, E2, NS3, NS4A, NS5A and the mature core protein. As to quaternary structure, interacts with protease NS2. Interacts with non-structural protein 4A; this interaction stabilizes the folding of NS3 serine protease. NS3-NS4A interaction is essential for NS3 activation and allows membrane anchorage of the latter. NS3/NS4A complex also prevents phosphorylation of host IRF3, thus preventing the establishment of dsRNA induced antiviral state. Interacts with host MAVS; this interaction leads to the cleavage and inhibition of host MAVS. Interacts with host TICAM1; this interaction leads to the cleavage and inhibition of host TICAM1. Interacts with host TANK-binding kinase/TBK1; this interaction results in the inhibition of the association between TBK1 and IRF3, which leads to the inhibition of IRF3 activation. Interacts with host RBM24. Part of the replication complex composed of NS2, NS3, NS4A, NS4B, NS5A and the RNA-directed RNA polymerase embedded in an ER-derived membranous web. Part of the viral assembly initiation complex composed of NS2, E1, E2, NS3, NS4A, NS5A and the mature core protein. Interacts with NS3 serine protease; this interaction stabilizes the folding of NS3 serine protease. NS3-NS4A interaction is essential for NS3 activation and allows membrane anchorage of the latter. Interacts with non-structural protein 5A (via N-terminus). Part of the replication complex composed of NS2, NS3, NS4A, NS4B, NS5A and the RNA-directed RNA polymerase embedded in an ER-derived membranous web. Part of the viral assembly initiation complex composed of NS2, E1, E2, NS3, NS4A, NS5A and the mature core protein. In terms of assembly, homomultimer. Interacts with non-structural protein NS5A. Interacts with host PLA2G4C; this interaction likely initiates the recruitment of replication complexes to lipid droplets. Interacts with host STING; this interaction disrupts the interaction between STING and TBK1 thereby suppressing the interferon signaling. Part of the replication complex composed of NS2, NS3, NS4A, NS4B, NS5A and the RNA-directed RNA polymerase embedded in an ER-derived membranous web. As to quaternary structure, monomer. Homodimer; dimerization is required for RNA-binding. Interacts with the mature core protein. Interacts (via N-terminus) with non-structural protein 4A. Interacts with non-structural protein 4B. Interacts (via region D2) with RNA-directed RNA polymerase. Part of the viral assembly initiation complex composed of NS2, E1, E2, NS3, NS4A, NS5A and the mature core protein. Part of the replication complex composed of NS2, NS3, NS4A, NS4B, NS5A and the RNA-directed RNA polymerase embedded in an ER-derived membranous web. Interacts with host GRB2. Interacts with host BIN1. Interacts with host PIK3R1. Interacts with host SRCAP. Interacts with host FKBP8. Interacts (via C-terminus) with host VAPB (via MSP domain). Interacts with host EIF2AK2/PKR; this interaction leads to disruption of EIF2AK2 dimerization by NS5A and probably allows the virus to evade the innate immune response. Interacts (via N-terminus) with host PACSIN2 (via N-terminus); this interaction attenuates protein kinase C alpha-mediated phosphorylation of PACSIN2 by disrupting the interaction between PACSIN2 and PRKCA. Interacts (via N-terminus) with host SRC kinase (via SH2 domain). Interacts with most Src-family kinases. Interacts with host IFI27 and SKP2; promotes the ubiquitin-mediated proteasomal degradation of NS5A. Interacts with host GPS2. Interacts with host TNFRSF21; this interaction allows the modulation by the virus of JNK, p38 MAPK, STAT3, and Akt signaling pathways in a DR6-dependent manner. Interacts (via N-terminus) with host CIDEB (via N-terminus); this interaction seems to regulate the association of HCV particles with APOE. Interacts with host CHKA/Choline Kinase-alpha; CHKA bridges host PI4KA and NS5A and potentiates NS5A-stimulated PI4KA activity, which then facilitates the targeting of the ternary complex to the ER for viral replication. Interacts with host SPSB2 (via C-terminus); this interaction targets NS5A for ubiquitination and degradation. Interacts with host RAB18; this interaction may promote the association of NS5A and other replicase components with lipid droplets. Interacts (via region D2) with host PPIA/CYPA; the interaction stimulates RNA-binding ability of NS5A and is dependent on the peptidyl-prolyl cis-trans isomerase activity of PPIA/CYPA. Interacts with host TRIM14; this interaction induces the degradation of NS5A. Homooligomer. Interacts with non-structural protein 5A. Interacts with host VAPB. Interacts with host PRK2/PKN2. Interacts with host HNRNPA1 and SEPT6; these interactions facilitate viral replication. Part of the replication complex composed of NS2, NS3, NS4A, NS4B, NS5A and the RNA-directed RNA polymerase. Requires Zn(2+) as cofactor. Mg(2+) is required as a cofactor. Post-translationally, specific enzymatic cleavages in vivo yield mature proteins. The structural proteins, core, E1, E2 and p7 are produced by proteolytic processing by host signal peptidases. The core protein precursor is synthesized as a 23 kDa, which is retained in the ER membrane through the hydrophobic signal peptide. Cleavage by the signal peptidase releases the 21 kDa mature core protein. The cleavage of the core protein precursor occurs between aminoacids 176 and 188 but the exact cleavage site is not known. Some degraded forms of the core protein appear as well during the course of infection. The other proteins (p7, NS2, NS3, NS4A, NS4B, NS5A and NS5B) are cleaved by the viral proteases. Autoprocessing between NS2 and NS3 is mediated by the NS2 cysteine protease catalytic domain and regulated by the NS3 N-terminal domain. In terms of processing, phosphorylated by host PKC and PKA. Ubiquitinated; mediated by UBE3A and leading to core protein subsequent proteasomal degradation. Post-translationally, highly N-glycosylated. In terms of processing, palmitoylation is required for NS2/3 autoprocessing and E2 recruitment to membranes. Palmitoylated. This modification may play a role in its polymerization or in protein-protein interactions. Post-translationally, phosphorylated on serines in a basal form termed p56. p58 is a hyperphosphorylated form of p56. p56 and p58 coexist in the cell in roughly equivalent amounts. Hyperphosphorylation is dependent on the presence of NS4A. Host CSNK1A1/CKI-alpha or RPS6KB1 kinases may be responsible for NS5A phosphorylation. In terms of processing, tyrosine phosphorylation is essential for the interaction with host SRC. Ubiquitinated. Ubiquitination, most probably at Lys-2353, mediated by host IFI27 and SKP2 leads to proteasomal degradation, restricting viral infection. Ubiquitination by host TRIM22 leads to interruption of viral replication. Post-translationally, the N-terminus is phosphorylated by host PRK2/PKN2.

The protein resides in the host endoplasmic reticulum membrane. It localises to the host mitochondrion membrane. Its subcellular location is the virion. The protein localises to the host cytoplasm. It is found in the host nucleus. The protein resides in the host lipid droplet. It localises to the virion membrane. Its subcellular location is the host mitochondrion. The protein localises to the host cell membrane. It is found in the host perinuclear region. The enzyme catalyses Hydrolysis of four peptide bonds in the viral precursor polyprotein, commonly with Asp or Glu in the P6 position, Cys or Thr in P1 and Ser or Ala in P1'.. The catalysed reaction is a ribonucleoside 5'-triphosphate + H2O = a ribonucleoside 5'-diphosphate + phosphate + H(+). It carries out the reaction ATP + H2O = ADP + phosphate + H(+). It catalyses the reaction RNA(n) + a ribonucleoside 5'-triphosphate = RNA(n+1) + diphosphate. Inhibited by the antiviral drug hexamethylene amiloride. Inhibition by amantadine appears to be genotype-dependent. Also inhibited by long-alkyl-chain iminosugar derivatives. Its activity is regulated as follows. Activity is up-regulated by PRK2/PKN2-mediated phosphorylation. Packages viral RNA to form a viral nucleocapsid, and promotes virion budding. Participates in the viral particle production as a result of its interaction with the non-structural protein 5A. Binds RNA and may function as a RNA chaperone to induce the RNA structural rearrangements taking place during virus replication. Modulates viral translation initiation by interacting with viral IRES and 40S ribosomal subunit. Affects various cell signaling pathways, host immunity and lipid metabolism. Prevents the establishment of cellular antiviral state by blocking the interferon-alpha/beta (IFN-alpha/beta) and IFN-gamma signaling pathways and by blocking the formation of phosphorylated STAT1 and promoting ubiquitin-mediated proteasome-dependent degradation of STAT1. Activates STAT3 leading to cellular transformation. Regulates the activity of cellular genes, including c-myc and c-fos. May repress the promoter of p53, and sequester CREB3 and SP110 isoform 3/Sp110b in the cytoplasm. Represses cell cycle negative regulating factor CDKN1A, thereby interrupting an important check point of normal cell cycle regulation. Targets transcription factors involved in the regulation of inflammatory responses and in the immune response: suppresses TNF-induced NF-kappa-B activation, and activates AP-1. Binds to dendritic cells (DCs) via C1QR1, resulting in down-regulation of T-lymphocytes proliferation. Alters lipid metabolism by interacting with hepatocellular proteins involved in lipid accumulation and storage. Induces up-regulation of FAS promoter activity, and thereby contributes to the increased triglyceride accumulation in hepatocytes (steatosis). Functionally, forms a heterodimer with envelope glycoprotein E2, which mediates virus attachment to the host cell, virion internalization through clathrin-dependent endocytosis and fusion with host membrane. Fusion with the host cell is most likely mediated by both E1 and E2, through conformational rearrangements of the heterodimer required for fusion rather than a classical class II fusion mechanism. E1/E2 heterodimer binds host apolipoproteins such as APOB and ApoE thereby forming a lipo-viro-particle (LVP). APOE associated to the LVP allows the initial virus attachment to cell surface receptors such as the heparan sulfate proteoglycans (HSPGs), syndecan-1 (SDC1), syndecan-1 (SDC2), the low-density lipoprotein receptor (LDLR) and scavenger receptor class B type I (SCARB1). The cholesterol transfer activity of SCARB1 allows E2 exposure and binding of E2 to SCARB1 and the tetraspanin CD81. E1/E2 heterodimer binding on CD81 activates the epithelial growth factor receptor (EGFR) signaling pathway. Diffusion of the complex E1-E2-EGFR-SCARB1-CD81 to the cell lateral membrane allows further interaction with Claudin 1 (CLDN1) and occludin (OCLN) to finally trigger HCV entry. Its function is as follows. Forms a heterodimer with envelope glycoprotein E1, which mediates virus attachment to the host cell, virion internalization through clathrin-dependent endocytosis and fusion with host membrane. Fusion with the host cell is most likely mediated by both E1 and E2, through conformational rearrangements of the heterodimer required for fusion rather than a classical class II fusion mechanism. The interaction between envelope glycoprotein E2 and host apolipoprotein E/APOE allows the proper assembly, maturation and infectivity of the viral particles. This interaction is probably promoted via the up-regulation of cellular autophagy by the virus. E1/E2 heterodimer binds host apolipoproteins such as APOB and APOE thereby forming a lipo-viro-particle (LVP). APOE associated to the LVP allows the initial virus attachment to cell surface receptors such as the heparan sulfate proteoglycans (HSPGs), syndecan-1 (SDC1), syndecan-1 (SDC2), the low-density lipoprotein receptor (LDLR) and scavenger receptor class B type I (SCARB1). The cholesterol transfer activity of SCARB1 allows E2 exposure and binding of E2 to SCARB1 and the tetraspanin CD81. E1/E2 heterodimer binding on CD81 activates the epithelial growth factor receptor (EGFR) signaling pathway. Diffusion of the complex E1-E2-EGFR-SCARB1-CD81 to the cell lateral membrane allows further interaction with Claudin 1 (CLDN1) and occludin (OCLN) to finally trigger HCV entry. Inhibits host EIF2AK2/PKR activation, preventing the establishment of an antiviral state. Viral ligand for CD209/DC-SIGN and CLEC4M/DC-SIGNR, which are respectively found on dendritic cells (DCs), and on liver sinusoidal endothelial cells and macrophage-like cells of lymph node sinuses. These interactions allow the capture of circulating HCV particles by these cells and subsequent facilitated transmission to permissive cells such as hepatocytes and lymphocyte subpopulations. The interaction between E2 and host amino acid transporter complex formed by SLC3A2 and SLC7A5/LAT1 may facilitate viral entry into host cell. In terms of biological role, ion channel protein that acts as a viroporin and plays an essential role in the assembly, envelopment and secretion of viral particles. Regulates the host cell secretory pathway, which induces the intracellular retention of viral glycoproteins and favors assembly of viral particles. Creates a pore in acidic organelles and releases Ca(2+) and H(+) in the cytoplasm of infected cells, leading to a productive viral infection. High levels of cytoplasmic Ca(2+) may trigger membrane trafficking and transport of viral ER-associated proteins to viroplasms, sites of viral genome replication. This ionic imbalance induces the assembly of the inflammasome complex, which triggers the maturation of pro-IL-1beta into IL-1beta through the action of caspase-1. Targets also host mitochondria and induces mitochondrial depolarization. In addition of its role as a viroporin, acts as a lipid raft adhesion factor. Cysteine protease required for the proteolytic auto-cleavage between the non-structural proteins NS2 and NS3. The N-terminus of NS3 is required for the function of NS2 protease (active region NS2-3). Promotes the initiation of viral particle assembly by mediating the interaction between structural and non-structural proteins. Functionally, displays three enzymatic activities: serine protease with a chymotrypsin-like fold, NTPase and RNA helicase. NS3 serine protease, in association with NS4A, is responsible for the cleavages of NS3-NS4A, NS4A-NS4B, NS4B-NS5A and NS5A-NS5B. The NS3/NS4A complex prevents phosphorylation of host IRF3, thus preventing the establishment of dsRNA induced antiviral state. The NS3/NS4A complex induces host amino acid transporter component SLC3A2, thus contributing to HCV propagation. NS3 RNA helicase binds to RNA and unwinds both dsDNA and dsRNA in the 3' to 5' direction, and likely resolves RNA complicated stable secondary structures in the template strand. Binds a single ATP and catalyzes the unzipping of a single base pair of dsRNA. Inhibits host antiviral proteins TBK1 and IRF3 thereby preventing the establishment of an antiviral state. Cleaves host MAVS/CARDIF thereby preventing the establishment of an antiviral state. Cleaves host TICAM1/TRIF, thereby disrupting TLR3 signaling and preventing the establishment of an antiviral state. Its function is as follows. Peptide cofactor which forms a non-covalent complex with the N-terminal of NS3 serine protease. The NS3/NS4A complex prevents phosphorylation of host IRF3, thus preventing the establishment of dsRNA induced antiviral state. The NS3/NS4A complex induces host amino acid transporter component SLC3A2, thus contributing to HCV propagation. In terms of biological role, induces a specific membrane alteration that serves as a scaffold for the virus replication complex. This membrane alteration gives rise to the so-called ER-derived membranous web that contains the replication complex. NS4B self-interaction contributes to its function in membranous web formation. Promotes host TRIF protein degradation in a CASP8-dependent manner thereby inhibiting host TLR3-mediated interferon signaling. Disrupts the interaction between STING and TBK1 contributing to the inhibition of interferon signaling. Phosphorylated protein that is indispensable for viral replication and assembly. Both hypo- and hyperphosphorylated states are required for the viral life cycle. The hyperphosphorylated form of NS5A is an inhibitor of viral replication. Involved in RNA-binding and especially in binding to the viral genome. Zinc is essential for RNA-binding. Participates in the viral particle production as a result of its interaction with the mature viral core protein. Its interaction with host VAPB may target the viral replication complex to vesicles. Down-regulates viral IRES translation initiation. Mediates interferon resistance, presumably by interacting with and inhibiting host EIF2AK2/PKR. Prevents BIN1-induced apoptosis. Acts as a transcriptional activator of some host genes important for viral replication when localized in the nucleus. Via the interaction with host PACSIN2, modulates lipid droplet formation in order to promote virion assembly. Modulates TNFRSF21/DR6 signaling pathway for viral propagation. Functionally, RNA-dependent RNA polymerase that performs primer-template recognition and RNA synthesis during viral replication. Initiates RNA transcription/replication at a flavin adenine dinucleotide (FAD), resulting in a 5'- FAD cap on viral RNAs. In this way, recognition of viral 5' RNA by host pattern recognition receptors can be bypassed, thereby evading activation of antiviral pathways. In Hepatitis C virus genotype 6k (isolate VN405) (HCV), this protein is Genome polyprotein.